Consider the following 122-residue polypeptide: Acidic phospholipase A2 (122 aa).

Cystine bridges form between Cys26–Cys115, Cys28–Cys44, Cys43–Cys95, Cys49–Cys122, Cys50–Cys88, Cys57–Cys81, and Cys75–Cys86. Residues Tyr27, Gly29, and Gly31 each coordinate Ca(2+). Residue His47 is part of the active site. Asp48 is a Ca(2+) binding site. Asp89 is an active-site residue.

Belongs to the phospholipase A2 family. Group II subfamily. D49 sub-subfamily. Ca(2+) is required as a cofactor. Contains 7 disulfide bonds. In terms of tissue distribution, expressed by the venom gland.

It localises to the secreted. The catalysed reaction is a 1,2-diacyl-sn-glycero-3-phosphocholine + H2O = a 1-acyl-sn-glycero-3-phosphocholine + a fatty acid + H(+). In terms of biological role, snake venom phospholipase A2 (PLA2) that displays low systemic toxicity and causes severe symptoms only at very high concentrations (15 mg/kg). Has neither coagulant nor anticoagulant activity. PLA2 catalyzes the calcium-dependent hydrolysis of the 2-acyl groups in 3-sn-phosphoglycerides. In Bothrops ammodytoides (Yararanata), this protein is Acidic phospholipase A2.